Reading from the N-terminus, the 205-residue chain is MRLRLFLAASALALLSGCAGLTSHEALEGQGDAQTWKTHKQQLSELDAWQIDGKVGIRAPRDSGSGTLFWLQRQGYYDIRLSGPLGRGAARLTGREGAVSLEVAGQGRYQAESPEALLEEQLGWRLPVSHLLWWVRGLPAPDSKSRLTLDADSRLARLEQDGWQIEYTRYAEQNGYWLPERLKLHGQDLDVTLVIKDWQPRQLGR.

Residues M1–G17 form the signal peptide. A lipid anchor (N-palmitoyl cysteine) is attached at C18. C18 carries the S-diacylglycerol cysteine lipid modification.

It belongs to the LolB family. As to quaternary structure, monomer.

The protein localises to the cell outer membrane. Its function is as follows. Plays a critical role in the incorporation of lipoproteins in the outer membrane after they are released by the LolA protein. The sequence is that of Outer-membrane lipoprotein LolB from Pseudomonas aeruginosa (strain LESB58).